The primary structure comprises 132 residues: AP-2 complex subunit sigma (132 aa).

It belongs to the adaptor complexes small subunit family. As to quaternary structure, adaptor protein complex 2 (AP-2) is a heterotetramer composed of two large adaptins (alpha-type and beta-type subunits), a medium adaptin (mu-type subunit AP50) and a small adaptin (sigma-type subunit AP17). In terms of tissue distribution, widely expressed in the embryo, endosperm, leaf and root.

The protein localises to the cell membrane. The protein resides in the membrane. It localises to the coated pit. Component of the adaptor complexes which link clathrin to receptors in coated vesicles. Clathrin-associated protein complexes are believed to interact with the cytoplasmic tails of membrane proteins, leading to their selection and concentration. AP2S1/AP17 is a subunit of the plasma membrane adaptor. The complex binds polyphosphoinositides. This is AP-2 complex subunit sigma (AP-17) from Zea mays (Maize).